The following is a 451-amino-acid chain: Trigger factor (451 aa).

Residues 173–258 (GDRVTVDFVG…LKKVEWAHLP (86 aa)) form the PPIase FKBP-type domain.

It belongs to the FKBP-type PPIase family. Tig subfamily.

The protein resides in the cytoplasm. It carries out the reaction [protein]-peptidylproline (omega=180) = [protein]-peptidylproline (omega=0). Involved in protein export. Acts as a chaperone by maintaining the newly synthesized protein in an open conformation. Functions as a peptidyl-prolyl cis-trans isomerase. In Cupriavidus taiwanensis (strain DSM 17343 / BCRC 17206 / CCUG 44338 / CIP 107171 / LMG 19424 / R1) (Ralstonia taiwanensis (strain LMG 19424)), this protein is Trigger factor.